Here is a 547-residue protein sequence, read N- to C-terminus: Large cysteine-rich periplasmic protein OmcB, serovar E (547 aa).

An N-terminal signal peptide occupies residues 1 to 22 (MNKLIRRAVTIFAVTSVASLFA). The propeptide occupies 23–40 (SGVLETSMAESLSTNVIS). The disordered stretch occupies residues 46-83 (AKDNTSHKSKKARKNHSKETLVDRKEVAPVHESKATGP). Residues 52 to 61 (HKSKKARKNH) are compositionally biased toward basic residues. Basic and acidic residues predominate over residues 62–79 (SKETLVDRKEVAPVHESK).

In terms of assembly, part of a disulfide cross-linked outer membrane complex (COMC) composed of the major outer membrane porin (MOMP), the small cysteine-rich protein (OmcA) and the large cysteine-rich periplasmic protein (OmcB).

The protein localises to the periplasm. In elementary bodies (EBs, the infectious stage, which is able to survive outside the host cell) provides the structural integrity of the outer envelope through disulfide cross-links with the small cysteine-rich protein and the major outer membrane protein. It has been described in publications as the Sarkosyl-insoluble COMC (Chlamydia outer membrane complex), and serves as the functional equivalent of peptidoglycan. In Chlamydia trachomatis, this protein is Large cysteine-rich periplasmic protein OmcB, serovar E (omcB).